Here is a 245-residue protein sequence, read N- to C-terminus: MSRILLGVNIDHIATLRQARGTSYPDPVHAAAVAEHAGADGITIHLREDRRHIIDRDVYLLAKTLKTRMNFECAVTEEMLNIACEVKPTYVCLVPEKRQEVTTEGGLDVAGQLDKITAAVSRLAANGIQVSLFIDADKTQIDAAVASGAPLIEIHTGCYADAKTADEEAKELERIREMAKYAHGKGLIVNAGHGLHYHNVKPIAAIPELYELNIGHAIVARAAIDGLATAVKDMKTLMLEGRRGE.

Residue Asn9 coordinates 3-amino-2-oxopropyl phosphate. Position 11–12 (11–12 (DH)) interacts with 1-deoxy-D-xylulose 5-phosphate. A 3-amino-2-oxopropyl phosphate-binding site is contributed by Arg20. The active-site Proton acceptor is His45. Residues Arg47 and His52 each contribute to the 1-deoxy-D-xylulose 5-phosphate site. The active-site Proton acceptor is the Glu72. Thr102 lines the 1-deoxy-D-xylulose 5-phosphate pocket. His193 acts as the Proton donor in catalysis. 3-amino-2-oxopropyl phosphate is bound by residues Gly194 and 215 to 216 (GH).

It belongs to the PNP synthase family. In terms of assembly, homooctamer; tetramer of dimers.

The protein localises to the cytoplasm. The catalysed reaction is 3-amino-2-oxopropyl phosphate + 1-deoxy-D-xylulose 5-phosphate = pyridoxine 5'-phosphate + phosphate + 2 H2O + H(+). The protein operates within cofactor biosynthesis; pyridoxine 5'-phosphate biosynthesis; pyridoxine 5'-phosphate from D-erythrose 4-phosphate: step 5/5. In terms of biological role, catalyzes the complicated ring closure reaction between the two acyclic compounds 1-deoxy-D-xylulose-5-phosphate (DXP) and 3-amino-2-oxopropyl phosphate (1-amino-acetone-3-phosphate or AAP) to form pyridoxine 5'-phosphate (PNP) and inorganic phosphate. This chain is Pyridoxine 5'-phosphate synthase, found in Shewanella oneidensis (strain ATCC 700550 / JCM 31522 / CIP 106686 / LMG 19005 / NCIMB 14063 / MR-1).